A 515-amino-acid chain; its full sequence is Methionine--tRNA ligase (515 aa).

Positions 13–23 (AYPNGKPHIGH) match the 'HIGH' region motif. The 'KMSKS' region signature appears at 300-304 (KMSKS). ATP is bound at residue Lys-303.

The protein belongs to the class-I aminoacyl-tRNA synthetase family. MetG type 2B subfamily. In terms of assembly, monomer.

It is found in the cytoplasm. The catalysed reaction is tRNA(Met) + L-methionine + ATP = L-methionyl-tRNA(Met) + AMP + diphosphate. Is required not only for elongation of protein synthesis but also for the initiation of all mRNA translation through initiator tRNA(fMet) aminoacylation. The polypeptide is Methionine--tRNA ligase (Brucella suis biovar 1 (strain 1330)).